Consider the following 511-residue polypeptide: Maturase K (511 aa).

It belongs to the intron maturase 2 family. MatK subfamily.

It is found in the plastid. Its subcellular location is the chloroplast. In terms of biological role, usually encoded in the trnK tRNA gene intron. Probably assists in splicing its own and other chloroplast group II introns. The polypeptide is Maturase K (Nardus stricta (Mat-grass)).